Here is an 806-residue protein sequence, read N- to C-terminus: Acetyl-CoA decarbonylase/synthase complex subunit alpha 1 (806 aa).

The [4Fe-4S] cluster site is built by Cys73, Cys76, Cys77, Cys79, Cys84, and Cys94. His117 provides a ligand contact to CO. His250, Cys278, and Cys323 together coordinate [Ni-4Fe-4S] cluster. 2 consecutive 4Fe-4S ferredoxin-type domains span residues 407 to 436 (DEEFTNWVMKCADCGACMIACPEELDIPEA) and 446 to 475 (SYLDILHDQCIGCRRCEQVCKKEIPILNII). Residues Cys417, Cys420, Cys423, Cys427, Cys455, Cys458, Cys461, and Cys465 each contribute to the [4Fe-4S] cluster site. The [Ni-4Fe-4S] cluster site is built by Cys523, Cys552, and Cys587.

This sequence belongs to the Ni-containing carbon monoxide dehydrogenase family. In terms of assembly, heterotetramer of two alpha and two epsilon subunits. The ACDS complex is made up of alpha, epsilon, beta, gamma and delta subunits with a probable stoichiometry of (alpha(2)epsilon(2))(4)-beta(8)-(gamma(1)delta(1))(8). The cofactor is [4Fe-4S] cluster. [Ni-4Fe-4S] cluster serves as cofactor.

The catalysed reaction is CO + 2 oxidized [2Fe-2S]-[ferredoxin] + H2O = 2 reduced [2Fe-2S]-[ferredoxin] + CO2 + 2 H(+). It functions in the pathway one-carbon metabolism; methanogenesis from acetate. Carbon monoxide dehydrogenase activity is inhibited by KCN and is rapidly inactivated by O(2). Functionally, part of the ACDS complex that catalyzes the reversible cleavage of acetyl-CoA, allowing growth on acetate as sole source of carbon and energy. The alpha-epsilon subcomponent functions as a carbon monoxide dehydrogenase. The protein is Acetyl-CoA decarbonylase/synthase complex subunit alpha 1 of Methanosarcina barkeri (strain Fusaro / DSM 804).